The chain runs to 494 residues: Probable malate:quinone oxidoreductase (494 aa).

It belongs to the MQO family. FAD is required as a cofactor.

It catalyses the reaction (S)-malate + a quinone = a quinol + oxaloacetate. It functions in the pathway carbohydrate metabolism; tricarboxylic acid cycle; oxaloacetate from (S)-malate (quinone route): step 1/1. The chain is Probable malate:quinone oxidoreductase from Kocuria rhizophila (strain ATCC 9341 / DSM 348 / NBRC 103217 / DC2201).